The primary structure comprises 114 residues: Phosphoribosyl-AMP cyclohydrolase (114 aa).

Asp-80 serves as a coordination point for Mg(2+). Cys-81 is a Zn(2+) binding site. Mg(2+) contacts are provided by Asp-82 and Asp-84. Residues Cys-97 and Cys-104 each coordinate Zn(2+).

This sequence belongs to the PRA-CH family. As to quaternary structure, homodimer. Mg(2+) serves as cofactor. It depends on Zn(2+) as a cofactor.

The protein localises to the cytoplasm. It catalyses the reaction 1-(5-phospho-beta-D-ribosyl)-5'-AMP + H2O = 1-(5-phospho-beta-D-ribosyl)-5-[(5-phospho-beta-D-ribosylamino)methylideneamino]imidazole-4-carboxamide. It functions in the pathway amino-acid biosynthesis; L-histidine biosynthesis; L-histidine from 5-phospho-alpha-D-ribose 1-diphosphate: step 3/9. Functionally, catalyzes the hydrolysis of the adenine ring of phosphoribosyl-AMP. The chain is Phosphoribosyl-AMP cyclohydrolase from Rhodococcus jostii (strain RHA1).